The following is a 133-amino-acid chain: Putative elongation factor 1-delta-like protein (133 aa).

Residues 58–73 (SLAGSLGPGASSGPSG) show a composition bias toward low complexity. 2 disordered regions span residues 58–77 (SLAG…DHSE) and 89–133 (NQRD…TSRG). A compositionally biased stretch (basic and acidic residues) spans 89 to 102 (NQRDLAERAGEELA).

Belongs to the EF-1-beta/EF-1-delta family.

The protein is Putative elongation factor 1-delta-like protein (EEF1DP3) of Homo sapiens (Human).